The sequence spans 455 residues: Bifunctional protein GlmU (455 aa).

The interval 1–227 (MDSLSIVILA…SWEAAGVNNK (227 aa)) is pyrophosphorylase. UDP-N-acetyl-alpha-D-glucosamine-binding positions include 9–12 (LAAG), Lys23, Gln74, 79–80 (GT), 101–103 (YGD), Gly137, Glu152, Asn167, and Asn225. Asp103 provides a ligand contact to Mg(2+). Asn225 is a Mg(2+) binding site. The tract at residues 228–248 (VQLAELERILQANQARALLEA) is linker. Residues 249 to 455 (GVTLADPARI…GWKRPQKKSG (207 aa)) form an N-acetyltransferase region. UDP-N-acetyl-alpha-D-glucosamine is bound by residues Arg331 and Lys349. His361 acts as the Proton acceptor in catalysis. Residues Tyr364 and Asn375 each coordinate UDP-N-acetyl-alpha-D-glucosamine. Acetyl-CoA contacts are provided by residues Ala378, 384-385 (NY), Ser403, Ala421, and Arg438.

This sequence in the N-terminal section; belongs to the N-acetylglucosamine-1-phosphate uridyltransferase family. In the C-terminal section; belongs to the transferase hexapeptide repeat family. In terms of assembly, homotrimer. The cofactor is Mg(2+).

Its subcellular location is the cytoplasm. It carries out the reaction alpha-D-glucosamine 1-phosphate + acetyl-CoA = N-acetyl-alpha-D-glucosamine 1-phosphate + CoA + H(+). It catalyses the reaction N-acetyl-alpha-D-glucosamine 1-phosphate + UTP + H(+) = UDP-N-acetyl-alpha-D-glucosamine + diphosphate. It participates in nucleotide-sugar biosynthesis; UDP-N-acetyl-alpha-D-glucosamine biosynthesis; N-acetyl-alpha-D-glucosamine 1-phosphate from alpha-D-glucosamine 6-phosphate (route II): step 2/2. It functions in the pathway nucleotide-sugar biosynthesis; UDP-N-acetyl-alpha-D-glucosamine biosynthesis; UDP-N-acetyl-alpha-D-glucosamine from N-acetyl-alpha-D-glucosamine 1-phosphate: step 1/1. Its pathway is bacterial outer membrane biogenesis; LPS lipid A biosynthesis. Its function is as follows. Catalyzes the last two sequential reactions in the de novo biosynthetic pathway for UDP-N-acetylglucosamine (UDP-GlcNAc). The C-terminal domain catalyzes the transfer of acetyl group from acetyl coenzyme A to glucosamine-1-phosphate (GlcN-1-P) to produce N-acetylglucosamine-1-phosphate (GlcNAc-1-P), which is converted into UDP-GlcNAc by the transfer of uridine 5-monophosphate (from uridine 5-triphosphate), a reaction catalyzed by the N-terminal domain. In Chromobacterium violaceum (strain ATCC 12472 / DSM 30191 / JCM 1249 / CCUG 213 / NBRC 12614 / NCIMB 9131 / NCTC 9757 / MK), this protein is Bifunctional protein GlmU.